A 158-amino-acid chain; its full sequence is 6,7-dimethyl-8-ribityllumazine synthase (158 aa).

Residues Phe22, 57–59 (AVE), and 81–83 (AVI) each bind 5-amino-6-(D-ribitylamino)uracil. 86–87 (GT) is a (2S)-2-hydroxy-3-oxobutyl phosphate binding site. The active-site Proton donor is the His89. Residue Phe114 participates in 5-amino-6-(D-ribitylamino)uracil binding. Arg128 serves as a coordination point for (2S)-2-hydroxy-3-oxobutyl phosphate.

This sequence belongs to the DMRL synthase family. Forms an icosahedral capsid composed of 60 subunits, arranged as a dodecamer of pentamers.

The catalysed reaction is (2S)-2-hydroxy-3-oxobutyl phosphate + 5-amino-6-(D-ribitylamino)uracil = 6,7-dimethyl-8-(1-D-ribityl)lumazine + phosphate + 2 H2O + H(+). The protein operates within cofactor biosynthesis; riboflavin biosynthesis; riboflavin from 2-hydroxy-3-oxobutyl phosphate and 5-amino-6-(D-ribitylamino)uracil: step 1/2. In terms of biological role, catalyzes the formation of 6,7-dimethyl-8-ribityllumazine by condensation of 5-amino-6-(D-ribitylamino)uracil with 3,4-dihydroxy-2-butanone 4-phosphate. This is the penultimate step in the biosynthesis of riboflavin. The sequence is that of 6,7-dimethyl-8-ribityllumazine synthase from Shewanella piezotolerans (strain WP3 / JCM 13877).